A 505-amino-acid polypeptide reads, in one-letter code: Maturase K (505 aa).

It belongs to the intron maturase 2 family. MatK subfamily.

It localises to the plastid. The protein localises to the chloroplast. Functionally, usually encoded in the trnK tRNA gene intron. Probably assists in splicing its own and other chloroplast group II introns. This is Maturase K from Portulacaria afra (Elephant's food).